The following is a 63-amino-acid chain: Large ribosomal subunit protein uL29 (63 aa).

It belongs to the universal ribosomal protein uL29 family.

This Vibrio campbellii (strain ATCC BAA-1116) protein is Large ribosomal subunit protein uL29.